A 744-amino-acid polypeptide reads, in one-letter code: Dual specificity protein kinase shkD (744 aa).

The interval 1–276 (MKRFFSNLFK…SGPPEILPEE (276 aa)) is disordered. 3 stretches are compositionally biased toward low complexity: residues 25 to 70 (PTTS…NSNQ), 79 to 107 (SPST…SFTP), and 127 to 200 (TSTT…QTAS). Residues 201–210 (VNHTSSDQSL) show a composition bias toward polar residues. Residues 211–236 (NAQNVTQTNNNNNNNNNNNNNNNANN) are compositionally biased toward low complexity. Residues 277–534 (IDRTDFLGQG…EILFRLNEIL (258 aa)) form the Protein kinase domain. Residues 283-291 (LGQGSFGSV) and K304 contribute to the ATP site. Residue D400 is the Proton acceptor of the active site. An SH2 domain is found at 641-734 (WFHGDIVREQ…LVPCPKFTQE (94 aa)).

This sequence belongs to the protein kinase superfamily. Ser/Thr protein kinase family. SH2 domain-containing protein kinase subfamily.

The protein resides in the membrane. The catalysed reaction is L-seryl-[protein] + ATP = O-phospho-L-seryl-[protein] + ADP + H(+). It carries out the reaction L-threonyl-[protein] + ATP = O-phospho-L-threonyl-[protein] + ADP + H(+). Functionally, required for proper chemotaxis and phagocytosis; proper spatiotemporal control of F-actin levels in chemotaxing cells. Negative regulator of the PI3K (phosphatidylinositol 3 kinase) pathway. Predominantly phosphorylates serines and threonines and tyrosines at a lower level. This chain is Dual specificity protein kinase shkD (shkD), found in Dictyostelium discoideum (Social amoeba).